A 238-amino-acid chain; its full sequence is UPF0328 protein ECU07_0010 (238 aa).

2 disordered regions span residues 1–154 (MAAP…NTQR) and 211–238 (GRLH…LATL). The segment covering 106–128 (HTEGCHTHEANPEPNTKHTETES) has biased composition (basic and acidic residues). The span at 129-152 (PKPQTSTQHHTPITIPSSLLSQNT) shows a compositional bias: polar residues.

Belongs to the UPF0328 family.

This Encephalitozoon cuniculi (strain GB-M1) (Microsporidian parasite) protein is UPF0328 protein ECU07_0010.